Reading from the N-terminus, the 540-residue chain is Probable tubulin polyglutamylase TTLL2 (540 aa).

The TTL domain maps to 41–384 (LKPLVFRVDE…NGLRSEEKKC (344 aa)). Residues Lys-169, 175–176 (RG), 197–200 (QKYI), and 210–212 (KCD) each bind ATP. A protein is bound at residue Arg-175. Arg-236 provides a ligand contact to L-glutamate. 255–256 (TN) is an ATP binding site. L-glutamate-binding residues include Ser-258 and Lys-278. 3 residues coordinate Mg(2+): Asp-330, Glu-343, and Asn-345. Residue Lys-361 coordinates L-glutamate. The disordered stretch occupies residues 479 to 499 (SQSQPHKMKGPAGDLPEAGST).

The protein belongs to the tubulin--tyrosine ligase family. Mg(2+) is required as a cofactor. Highly expressed in brain, kidney, liver and testis. Expressed in heart, lung, muscle and spleen.

Its function is as follows. Probable tubulin polyglutamylase that generates side chains of glutamate on the gamma-carboxyl group of specific glutamate residues within the C-terminal tail of target proteins. Similar to TTLL1, may acquire enzymatic activity only in complex with other proteins as it is most likely lacking domains important for autonomous activity. Probably involved in the side-chain initiation step of the polyglutamylation reaction rather than the elongation step. This Mus musculus (Mouse) protein is Probable tubulin polyglutamylase TTLL2.